The following is a 1496-amino-acid chain: Chromosome partition protein MukB (1496 aa).

Gly-63–Ser-70 lines the ATP pocket. Coiled-coil stretches lie at residues Lys-328–Ser-493 and Lys-536–Trp-632. Residues Pro-694 to Arg-811 form a flexible hinge region. 2 coiled-coil regions span residues Asn-861 to Glu-1171 and Ile-1235 to Ile-1291. Over residues Arg-1082–Gln-1091 the composition is skewed to basic and acidic residues. Positions Arg-1082–Lys-1101 are disordered.

It belongs to the SMC family. MukB subfamily. Homodimerization via its hinge domain. Binds to DNA via its C-terminal region. Interacts, and probably forms a ternary complex, with MukE and MukF via its C-terminal region. The complex formation is stimulated by calcium or magnesium. Interacts with tubulin-related protein FtsZ.

It is found in the cytoplasm. The protein localises to the nucleoid. In terms of biological role, plays a central role in chromosome condensation, segregation and cell cycle progression. Functions as a homodimer, which is essential for chromosome partition. Involved in negative DNA supercoiling in vivo, and by this means organize and compact chromosomes. May achieve or facilitate chromosome segregation by condensation DNA from both sides of a centrally located replisome during cell division. The chain is Chromosome partition protein MukB from Actinobacillus pleuropneumoniae serotype 3 (strain JL03).